The chain runs to 101 residues: ATP-dependent Clp protease adapter protein ClpS 2 (101 aa).

This sequence belongs to the ClpS family. Binds to the N-terminal domain of the chaperone ClpA.

In terms of biological role, involved in the modulation of the specificity of the ClpAP-mediated ATP-dependent protein degradation. In Rhizobium meliloti (strain 1021) (Ensifer meliloti), this protein is ATP-dependent Clp protease adapter protein ClpS 2.